The sequence spans 345 residues: S-adenosylmethionine:tRNA ribosyltransferase-isomerase (345 aa).

This sequence belongs to the QueA family. In terms of assembly, monomer.

It is found in the cytoplasm. It carries out the reaction 7-aminomethyl-7-carbaguanosine(34) in tRNA + S-adenosyl-L-methionine = epoxyqueuosine(34) in tRNA + adenine + L-methionine + 2 H(+). Its pathway is tRNA modification; tRNA-queuosine biosynthesis. Transfers and isomerizes the ribose moiety from AdoMet to the 7-aminomethyl group of 7-deazaguanine (preQ1-tRNA) to give epoxyqueuosine (oQ-tRNA). The polypeptide is S-adenosylmethionine:tRNA ribosyltransferase-isomerase (Lactococcus lactis subsp. lactis (strain IL1403) (Streptococcus lactis)).